The following is a 365-amino-acid chain: Homeobox protein Nkx-6.1 (365 aa).

Residues 35-136 (LYPAAYPPLP…SSSSASATSA (102 aa)) form a disordered region. 3 stretches are compositionally biased toward low complexity: residues 48-59 (PSSSSSSSSSSS), 69-92 (PGGL…QLSA), and 110-136 (ASGA…ATSA). Residues 102-269 (LSRPSMPVAS…KYLAGPERAR (168 aa)) are repressor domain. Arg-190 carries the post-translational modification Asymmetric dimethylarginine. A DNA-binding region (homeobox) is located at residues 237–296 (RKHTRPTFSGQQIFALEKTFEQTKYLAGPERARLAYSLGMTESQVKVWFQNRRTKWRKKH). A disordered region spans residues 295-365 (KHAAEMATAK…LHASEAEGSS (71 aa)). Residues 305-318 (KKQDSETERLKGTS) show a composition bias toward basic and acidic residues. The tract at residues 307-365 (QDSETERLKGTSENEEDDDDYNKPLDPNSDDEKITQLLKKHKSSGGSLLLHASEAEGSS) is involved in DNA-binding.

In terms of tissue distribution, pancreatic beta cells.

Its subcellular location is the nucleus. Functionally, transcription factor which binds to specific A/T-rich DNA sequences in the promoter regions of a number of genes. Involved in the development of insulin-producing beta cells in the islets of Langerhans at the secondary transition. Together with NKX2-2 and IRX3 acts to restrict the generation of motor neurons to the appropriate region of the neural tube. Belongs to the class II proteins of neuronal progenitor factors, which are induced by SHH signals. This chain is Homeobox protein Nkx-6.1 (Nkx6-1), found in Rattus norvegicus (Rat).